The chain runs to 589 residues: Threonine--tRNA ligase (589 aa).

The interval 191 to 487 (DHRKIGKNLG…LLEQTKGNFP (297 aa)) is catalytic. 3 residues coordinate Zn(2+): C284, H335, and H464.

This sequence belongs to the class-II aminoacyl-tRNA synthetase family. In terms of assembly, homodimer. The cofactor is Zn(2+).

The protein localises to the cytoplasm. The enzyme catalyses tRNA(Thr) + L-threonine + ATP = L-threonyl-tRNA(Thr) + AMP + diphosphate + H(+). Functionally, catalyzes the attachment of threonine to tRNA(Thr) in a two-step reaction: L-threonine is first activated by ATP to form Thr-AMP and then transferred to the acceptor end of tRNA(Thr). Also edits incorrectly charged L-seryl-tRNA(Thr). This Mycoplasmopsis pulmonis (strain UAB CTIP) (Mycoplasma pulmonis) protein is Threonine--tRNA ligase.